Reading from the N-terminus, the 590-residue chain is Hyaluronan synthase 1 (590 aa).

The Cytoplasmic segment spans residues Met1–Met31. The chain crosses the membrane as a helical span at residues Ile32 to Phe52. At Gln53 to Val60 the chain is on the extracellular side. The chain crosses the membrane as a helical span at residues Leu61–Phe81. Residues Ala82–His401 are Cytoplasmic-facing. A helical transmembrane segment spans residues Ile402–Val422. Residues Ile423–Leu425 lie on the Extracellular side of the membrane. Residues Leu426–Val446 form a helical membrane-spanning segment. The Cytoplasmic segment spans residues Leu447–Arg456. Residues Gly457–Pro477 traverse the membrane as a helical segment. Topologically, residues Ser478–Pro505 are extracellular. The chain crosses the membrane as a helical span at residues Val506 to Met526. Over Asp527–His543 the chain is Cytoplasmic. A helical membrane pass occupies residues Leu544–Val564. The Extracellular portion of the chain corresponds to Trp565 to Val588.

Belongs to the NodC/HAS family. Requires Mg(2+) as cofactor.

Its subcellular location is the membrane. It carries out the reaction [hyaluronan](n) + UDP-N-acetyl-alpha-D-glucosamine = N-acetyl-beta-D-glucosaminyl-(1-&gt;4)-[hyaluronan](n) + UDP + H(+). The enzyme catalyses N-acetyl-beta-D-glucosaminyl-(1-&gt;4)-[hyaluronan](n) + UDP-alpha-D-glucuronate = [hyaluronan](n+1) + UDP + H(+). It functions in the pathway glycan biosynthesis; hyaluronan biosynthesis. In terms of biological role, catalyzes the addition of GlcNAc or GlcUA monosaccharides to the nascent hyaluronan polymer. Therefore, it is essential to hyaluronan synthesis a major component of most extracellular matrices that has a structural role in tissues architectures and regulates cell adhesion, migration and differentiation. Also able to catalyze the synthesis of chito-oligosaccharide depending on the substrate. The protein is Hyaluronan synthase 1 (has1) of Xenopus tropicalis (Western clawed frog).